Consider the following 206-residue polypeptide: Large ribosomal subunit protein uL4 (206 aa).

A disordered region spans residues 63 to 97 (MYKQKGTGRARHHSARAPQFRGGGKAHGPVVRSHE). Residues 64–77 (YKQKGTGRARHHSA) show a composition bias toward basic residues.

Belongs to the universal ribosomal protein uL4 family. As to quaternary structure, part of the 50S ribosomal subunit.

One of the primary rRNA binding proteins, this protein initially binds near the 5'-end of the 23S rRNA. It is important during the early stages of 50S assembly. It makes multiple contacts with different domains of the 23S rRNA in the assembled 50S subunit and ribosome. In terms of biological role, forms part of the polypeptide exit tunnel. This is Large ribosomal subunit protein uL4 from Rhizobium rhizogenes (strain K84 / ATCC BAA-868) (Agrobacterium radiobacter).